We begin with the raw amino-acid sequence, 503 residues long: Probable cytosol aminopeptidase (503 aa).

Residues K270 and D275 each coordinate Mn(2+). K282 is a catalytic residue. D293, D352, and E354 together coordinate Mn(2+). Residue R356 is part of the active site.

It belongs to the peptidase M17 family. Mn(2+) serves as cofactor.

It localises to the cytoplasm. The enzyme catalyses Release of an N-terminal amino acid, Xaa-|-Yaa-, in which Xaa is preferably Leu, but may be other amino acids including Pro although not Arg or Lys, and Yaa may be Pro. Amino acid amides and methyl esters are also readily hydrolyzed, but rates on arylamides are exceedingly low.. The catalysed reaction is Release of an N-terminal amino acid, preferentially leucine, but not glutamic or aspartic acids.. Functionally, presumably involved in the processing and regular turnover of intracellular proteins. Catalyzes the removal of unsubstituted N-terminal amino acids from various peptides. This chain is Probable cytosol aminopeptidase, found in Klebsiella pneumoniae (strain 342).